The sequence spans 549 residues: Probable protein kinase UbiB (549 aa).

Residues 123 to 501 enclose the Protein kinase domain; the sequence is DFDNTPLASA…QQKAHKSNYL (379 aa). ATP contacts are provided by residues 129–137 and lysine 152; that span reads LASASISQV. The active-site Proton acceptor is aspartate 287. The next 2 membrane-spanning stretches (helical) occupy residues 498-518 and 520-540; these read SNYLLITSAVLVICGTILFNQ and ATLWASYGSITVGVVLWLLGW.

The protein belongs to the ABC1 family. UbiB subfamily.

It is found in the cell inner membrane. Its pathway is cofactor biosynthesis; ubiquinone biosynthesis [regulation]. Functionally, is probably a protein kinase regulator of UbiI activity which is involved in aerobic coenzyme Q (ubiquinone) biosynthesis. The chain is Probable protein kinase UbiB from Shewanella woodyi (strain ATCC 51908 / MS32).